Consider the following 718-residue polypeptide: U-box domain-containing protein 5 (718 aa).

The U-box domain occupies 218–292 (TLPEKFKCTL…SEWCAKNGLD (75 aa)). ARM repeat units lie at residues 493 to 532 (PHGP…NLSS), 534 to 571 (MEIC…NLCS), and 573 to 613 (EKGR…QLCV). The interval 662 to 704 (KEEEEEVSSRPEGRTTASPTSQVVTPVTHPEPVKITPSPKKSG) is disordered. Polar residues predominate over residues 676–686 (TTASPTSQVVT).

It carries out the reaction S-ubiquitinyl-[E2 ubiquitin-conjugating enzyme]-L-cysteine + [acceptor protein]-L-lysine = [E2 ubiquitin-conjugating enzyme]-L-cysteine + N(6)-ubiquitinyl-[acceptor protein]-L-lysine.. It participates in protein modification; protein ubiquitination. Functions as an E3 ubiquitin ligase. The sequence is that of U-box domain-containing protein 5 (PUB5) from Arabidopsis thaliana (Mouse-ear cress).